A 102-amino-acid chain; its full sequence is Integration host factor subunit alpha (102 aa).

It belongs to the bacterial histone-like protein family. Heterodimer of an alpha and a beta chain.

Functionally, this protein is one of the two subunits of integration host factor, a specific DNA-binding protein that functions in genetic recombination as well as in transcriptional and translational control. This chain is Integration host factor subunit alpha, found in Chromohalobacter salexigens (strain ATCC BAA-138 / DSM 3043 / CIP 106854 / NCIMB 13768 / 1H11).